A 318-amino-acid polypeptide reads, in one-letter code: Epithelial-stromal interaction protein 1 (318 aa).

The interval 1–60 is disordered; sequence MNTRNRVVNSGLGASPASRPTRDPQDPSGRQGELSPVEDQREGLEAAPKGPSRESVVHAG. Coiled coils occupy residues 73–188 and 240–280; these read NINR…HQQY and LKAE…HQTE.

In terms of tissue distribution, highly expressed in placenta, small intestine, spleen, kidney, thymus, liver, salivary gland and testes. Weakly expressed in breast, skeletal muscle and colon. Highly expressed in breast cancer upon interaction between tumor cells and stromal cells in vitro. Expressed in blood mononuclear cells from patients with systemic lupus erythematosus (SLE).

Plays a role in M1 macrophage polarization and is required for the proper regulation of gene expression during M1 versus M2 macrophage differentiation. Might play a role in RELA/p65 and STAT1 phosphorylation and nuclear localization upon activation of macrophages. This chain is Epithelial-stromal interaction protein 1 (EPSTI1), found in Homo sapiens (Human).